Reading from the N-terminus, the 390-residue chain is MSRRQEICRNFQRGSCKYGAQCRYLHASPHQQQQQQQAKPNPFGFGTGSRQQQQPSFGSQFQQQQQQQQKPNPFGFGVQGANAQSRNAPGPAKPFQNKWVRDPSAPTKQTEAVQPPQAQAAHTSCEDPQSCRQQISEDFKNEAPIWKLTCYAHLRNGPCNIKGDISFEELRAKAYEEGKQGHSLQSIVEGERNLQNAKLMEFTNLLNSARPSQTPSFPTMSSFPEVKNNSSFGASQTNGPPVFSSFSQIGAATNIGPGPGTTAPGMPASSPFGHPSSAPLAAPTFGSSQMKFGVSSVFGNQGSGQPFGSFQAPRFPSSKSPASSVQHRDIDRQSQELLNGMVTPPSVMFEESVGNNKNENQDDSIWLKEKWAIGEIPLDEPPQRHVSHVF.

The C3H1-type zinc-finger motif lies at 2–29 (SRRQEICRNFQRGSCKYGAQCRYLHASP). The segment at 27-129 (ASPHQQQQQQ…AAHTSCEDPQ (103 aa)) is disordered. The segment covering 48 to 76 (GSRQQQQPSFGSQFQQQQQQQQKPNPFGF) has biased composition (low complexity). A compositionally biased stretch (polar residues) spans 106 to 129 (PTKQTEAVQPPQAQAAHTSCEDPQ). Residues 146 to 211 (WKLTCYAHLR…FTNLLNSARP (66 aa)) are required for transcriptional activation activity. A compositionally biased stretch (polar residues) spans 230–248 (SSFGASQTNGPPVFSSFSQ). The disordered stretch occupies residues 230–284 (SSFGASQTNGPPVFSSFSQIGAATNIGPGPGTTAPGMPASSPFGHPSSAPLAAPT). The segment covering 250 to 268 (GAATNIGPGPGTTAPGMPA) has biased composition (low complexity).

Interacts with GSK1 and GSK4. In terms of processing, phosphorylated on serine and threonine residues by GSK1. Phosphorylation represses nuclear localization. In terms of tissue distribution, expressed in the adaxial face of the collar, nodes and the basal region of elongating internodes.

The protein resides in the nucleus. Its subcellular location is the cytoplasm. Transcriptional activator that binds double-stranded DNA and the single-stranded RNA polymers poly(rA), poly(rU) and poly(rG), but not poly(rC). Mediates optimal plant architecture through brassinosteroid (BR) signaling. May act as a negative regulator in sterol homeostasis. Acts as a negative regulator of BR signaling. Binds to the specific DNA sequence 5'-CTCGC-3' of BZR1 promoter and negatively regulates BZR1. Acts as an antagonistic transcription factor of BZR1 to attenuate the BR signaling pathway and regulate leaf bending. Represses the expression of ILI1, and activates that of IBH1 to balance the regulation activity of BZR1. This Oryza sativa subsp. japonica (Rice) protein is Zinc finger CCCH domain-containing protein 46.